We begin with the raw amino-acid sequence, 441 residues long: pH-response regulator protein palC (441 aa).

One can recognise a BRO1 domain in the interval Ile-3–Leu-352. 2 disordered regions span residues Arg-278 to Gly-304 and Lys-414 to Tyr-441.

It belongs to the palC family.

Its function is as follows. Required for the proteolytic cleavage of the transcription factor RIM101 in response to alkaline ambient pH. In Yarrowia lipolytica (strain CLIB 122 / E 150) (Yeast), this protein is pH-response regulator protein palC.